We begin with the raw amino-acid sequence, 247 residues long: 14-3-3 protein gamma-B (247 aa).

This sequence belongs to the 14-3-3 family. Homodimer, and heterodimer with other family members.

It is found in the cytoplasm. Its function is as follows. Adapter protein implicated in the regulation of a large spectrum of both general and specialized signaling pathways. Binds to a large number of partners, usually by recognition of a phosphoserine or phosphothreonine motif. Binding generally results in the modulation of the activity of the binding partner. In Xenopus laevis (African clawed frog), this protein is 14-3-3 protein gamma-B (ywhag-b).